A 447-amino-acid polypeptide reads, in one-letter code: Alpha-1,3-mannosyl-glycoprotein 2-beta-N-acetylglucosaminyltransferase (447 aa).

Residues 1–6 (MLKKQT) are Cytoplasmic-facing. Residues 7–29 (AGLVLWGAIIFVGWNALLLLFFW) traverse the membrane as a helical; Signal-anchor for type II membrane protein segment. Residues 30 to 447 (TRPAPGRLPS…TWTGYDPSWN (418 aa)) lie on the Lumenal side of the membrane. C115 and C145 are joined by a disulfide. Residues R117, D144, H190, and D212 each coordinate substrate. D213 provides a ligand contact to Mn(2+). A disulfide bond links C239 and C305. Residue D291 is the Proton acceptor of the active site. A substrate-binding site is contributed by S322.

Belongs to the glycosyltransferase 13 family. As to quaternary structure, interacts with MGAT4D. Interacts with BRI3. The cofactor is Mn(2+). As to expression, detected in kidney, liver and brain.

Its subcellular location is the golgi apparatus membrane. It is found in the cytoplasm. It localises to the perinuclear region. The enzyme catalyses N(4)-(alpha-D-Man-(1-&gt;3)-[alpha-D-Man-(1-&gt;3)-[alpha-D-Man-(1-&gt;6)]-alpha-D-Man-(1-&gt;6)]-beta-D-Man-(1-&gt;4)-beta-D-GlcNAc-(1-&gt;4)-beta-D-GlcNAc)-L-asparaginyl-[protein] (N-glucan mannose isomer 5A1,2) + UDP-N-acetyl-alpha-D-glucosamine = N(4)-{beta-D-GlcNAc-(1-&gt;2)-alpha-D-Man-(1-&gt;3)-[alpha-D-Man-(1-&gt;3)-[alpha-D-Man-(1-&gt;6)]-alpha-D-Man-(1-&gt;6)]-beta-D-Man-(1-&gt;4)-beta-D-GlcNAc-(1-&gt;4)-beta-D-GlcNAc}-L-asparaginyl-[protein] + UDP + H(+). It participates in protein modification; protein glycosylation. Functionally, initiates complex N-linked carbohydrate formation. Essential for the conversion of high-mannose to hybrid and complex N-glycans. In Mus musculus (Mouse), this protein is Alpha-1,3-mannosyl-glycoprotein 2-beta-N-acetylglucosaminyltransferase (Mgat1).